We begin with the raw amino-acid sequence, 311 residues long: Probable manganese-dependent inorganic pyrophosphatase (311 aa).

Mn(2+) is bound by residues His9, Asp13, Asp15, Asp75, His97, and Asp149.

The protein belongs to the PPase class C family. Requires Mn(2+) as cofactor.

The protein resides in the cytoplasm. The enzyme catalyses diphosphate + H2O = 2 phosphate + H(+). This chain is Probable manganese-dependent inorganic pyrophosphatase, found in Lactobacillus delbrueckii subsp. bulgaricus (strain ATCC BAA-365 / Lb-18).